The sequence spans 664 residues: METPLLVGLELRCPPHLFNTHSRPSSSLSIPALSLRILTPTAATTSSAVIELPANVAEAPRSKRHSNSYLARKSAISEVQRSSDFLSSLQRLATVLKVQDLNVILRDFGISGRWQDLIQLFEWMQQHGKISVSTYSSCIKFVGAKNVSKALEIYQSIPDESTKINVYICNSILSCLVKNGKLDSCIKLFDQMKRDGLKPDVVTYNTLLAGCIKVKNGYPKAIELIGELPHNGIQMDSVMYGTVLAICASNGRSEEAENFIQQMKVEGHSPNIYHYSSLLNSYSWKGDYKKADELMTEMKSIGLVPNKVMMTTLLKVYIKGGLFDRSRELLSELESAGYAENEMPYCMLMDGLSKAGKLEEARSIFDDMKGKGVRSDGYANSIMISALCRSKRFKEAKELSRDSETTYEKCDLVMLNTMLCAYCRAGEMESVMRMMKKMDEQAVSPDYNTFHILIKYFIKEKLHLLAYQTTLDMHSKGHRLEEELCSSLIYHLGKIRAQAEAFSVYNMLRYSKRTICKELHEKILHILIQGNLLKDAYIVVKDNAKMISQPTLKKFGRAFMISGNINLVNDVLKVLHGSGHKIDQVQFEIAISRYISQPDKKELLLQLLQWMPGQGYVVDSSTRNLILKNSHMFGRLLIAEILSKHHVASRPMIKSRPEQKFRCK.

Residues 1–72 (METPLLVGLE…KRHSNSYLAR (72 aa)) constitute a chloroplast transit peptide. PPR repeat units lie at residues 165-199 (NVYI…GLKP), 200-235 (DVVT…GIQM), 236-270 (DSVM…GHSP), 271-305 (NIYH…GLVP), 306-340 (NKVM…GYAE), 341-375 (NEMP…GVRS), 376-406 (DGYA…SETT), 411-445 (DLVM…AVSP), and 446-480 (DYNT…GHRL).

Belongs to the PPR family. P subfamily.

Its subcellular location is the plastid. The protein localises to the chloroplast. The protein is Pentatricopeptide repeat-containing protein At1g10910, chloroplastic of Arabidopsis thaliana (Mouse-ear cress).